Here is a 161-residue protein sequence, read N- to C-terminus: Ferric uptake regulation protein 1 (161 aa).

Zn(2+) is bound by residues Cys-94 and Cys-97.

The protein belongs to the Fur family.

The protein localises to the cytoplasm. In terms of biological role, acts as a global negative controlling element, employing Fe(2+) as a cofactor to bind the operator of the repressed genes. The polypeptide is Ferric uptake regulation protein 1 (fur1) (Mycolicibacterium fortuitum (Mycobacterium fortuitum)).